The following is a 646-amino-acid chain: Glutamine--tRNA ligase protein virJ (646 aa).

The disordered stretch occupies residues 25 to 65 (NELKKRIQKRARKAAAAANRSNAQQEKGNKPAANKPAAKPE). A compositionally biased stretch (low complexity) spans 38-61 (AAAAANRSNAQQEKGNKPAANKPA). Residues 98–108 (PEPNGYLHLGH) carry the 'HIGH' region motif. ATP contacts are provided by residues 99–101 (EPN) and 105–111 (HLGHAKA). L-glutamine contacts are provided by Asp147 and Tyr296. ATP contacts are provided by residues Thr315, 344-345 (RL), and 352-354 (MSK). A 'KMSKS' region motif is present at residues 351–355 (IMSKR).

It belongs to the class-I aminoacyl-tRNA synthetase family.

The enzyme catalyses tRNA(Gln) + L-glutamine + ATP = L-glutaminyl-tRNA(Gln) + AMP + diphosphate. In terms of biological role, glutamine--tRNA ligase; part of the gene cluster that mediates the biosynthesis of virensols and trichoxide, fungal natural products that contain or are derived from a salicylaldehyde core. VirJ does not seem to play any role in virensols and trichoxide biosynthesis. The chain is Glutamine--tRNA ligase protein virJ from Hypocrea virens (strain Gv29-8 / FGSC 10586) (Gliocladium virens).